Here is an 85-residue protein sequence, read N- to C-terminus: MSYQQQQCKQPCQPPPVCPPKKCPEPCPPLKCPEPCPPPKCPEPCPPPKCPEPCPEPCPPPSCQQKCPPAQPPPPCQQKCPPKSK.

Over residues 1–11 the composition is skewed to low complexity; sequence MSYQQQQCKQP. The disordered stretch occupies residues 1–20; the sequence is MSYQQQQCKQPCQPPPVCPP. 4 consecutive repeat copies span residues 21–29, 30–38, 39–47, and 48–56. The segment at 21 to 56 is 4 X 9 AA approximate tandem repeats; that stretch reads KKCPEPCPPLKCPEPCPPPKCPEPCPPPKCPEPCPE. The interval 57–85 is disordered; that stretch reads PCPPPSCQQKCPPAQPPPPCQQKCPPKSK.

The protein belongs to the cornifin (SPRR) family. As to expression, expressed in uterus.

It localises to the cytoplasm. Cross-linked envelope protein of keratinocytes. It is a keratinocyte protein that first appears in the cell cytosol, but ultimately becomes cross-linked to membrane proteins by transglutaminase. All that results in the formation of an insoluble envelope beneath the plasma membrane. This is Small proline-rich protein 2D (Sprr2d) from Mus musculus (Mouse).